The primary structure comprises 227 residues: Cytochrome c oxidase subunit 2 (227 aa).

Topologically, residues 1–14 (MAHPVQLGLQDATS) are mitochondrial intermembrane. The chain crosses the membrane as a helical span at residues 15-45 (PVMEELVTFHDHALMAMFLISFLILYALSAT). The Mitochondrial matrix segment spans residues 46-59 (LTTKLTNTNITDAQ). A helical transmembrane segment spans residues 60 to 87 (EMETIWTILPAVILVLIALPSLRILYMT). At 88 to 227 (DEINNPSFTI…IFEMGPVFTL (140 aa)) the chain is on the mitochondrial intermembrane side. Positions 161, 196, 198, 200, 204, and 207 each coordinate Cu cation. Residue E198 coordinates Mg(2+).

It belongs to the cytochrome c oxidase subunit 2 family. Component of the cytochrome c oxidase (complex IV, CIV), a multisubunit enzyme composed of 14 subunits. The complex is composed of a catalytic core of 3 subunits MT-CO1, MT-CO2 and MT-CO3, encoded in the mitochondrial DNA, and 11 supernumerary subunits COX4I, COX5A, COX5B, COX6A, COX6B, COX6C, COX7A, COX7B, COX7C, COX8 and NDUFA4, which are encoded in the nuclear genome. The complex exists as a monomer or a dimer and forms supercomplexes (SCs) in the inner mitochondrial membrane with NADH-ubiquinone oxidoreductase (complex I, CI) and ubiquinol-cytochrome c oxidoreductase (cytochrome b-c1 complex, complex III, CIII), resulting in different assemblies (supercomplex SCI(1)III(2)IV(1) and megacomplex MCI(2)III(2)IV(2)). Found in a complex with TMEM177, COA6, COX18, COX20, SCO1 and SCO2. Interacts with TMEM177 in a COX20-dependent manner. Interacts with COX20. Interacts with COX16. Cu cation is required as a cofactor.

It is found in the mitochondrion inner membrane. It carries out the reaction 4 Fe(II)-[cytochrome c] + O2 + 8 H(+)(in) = 4 Fe(III)-[cytochrome c] + 2 H2O + 4 H(+)(out). Functionally, component of the cytochrome c oxidase, the last enzyme in the mitochondrial electron transport chain which drives oxidative phosphorylation. The respiratory chain contains 3 multisubunit complexes succinate dehydrogenase (complex II, CII), ubiquinol-cytochrome c oxidoreductase (cytochrome b-c1 complex, complex III, CIII) and cytochrome c oxidase (complex IV, CIV), that cooperate to transfer electrons derived from NADH and succinate to molecular oxygen, creating an electrochemical gradient over the inner membrane that drives transmembrane transport and the ATP synthase. Cytochrome c oxidase is the component of the respiratory chain that catalyzes the reduction of oxygen to water. Electrons originating from reduced cytochrome c in the intermembrane space (IMS) are transferred via the dinuclear copper A center (CU(A)) of subunit 2 and heme A of subunit 1 to the active site in subunit 1, a binuclear center (BNC) formed by heme A3 and copper B (CU(B)). The BNC reduces molecular oxygen to 2 water molecules using 4 electrons from cytochrome c in the IMS and 4 protons from the mitochondrial matrix. In Theropithecus gelada (Gelada baboon), this protein is Cytochrome c oxidase subunit 2 (MT-CO2).